The chain runs to 157 residues: Small ribosomal subunit protein uS7 (157 aa).

The protein belongs to the universal ribosomal protein uS7 family. Part of the 30S ribosomal subunit. Contacts proteins S9 and S11.

In terms of biological role, one of the primary rRNA binding proteins, it binds directly to 16S rRNA where it nucleates assembly of the head domain of the 30S subunit. Is located at the subunit interface close to the decoding center, probably blocks exit of the E-site tRNA. This is Small ribosomal subunit protein uS7 from Marinomonas sp. (strain MWYL1).